A 147-amino-acid chain; its full sequence is Hemoglobin subunit epsilon (147 aa).

Positions 3 to 147 (HWSAEEKQLI…VAHALARKYH (145 aa)) constitute a Globin domain. Heme b contacts are provided by histidine 64 and histidine 93.

It belongs to the globin family. Heterotetramer of two epsilon chains and two alpha chains. Hemoglobin E (Hbe) contains a alpha-A chains while hemoglobin M (Hbm) contains alpha-D chains.

Its function is as follows. Beta-type chain found in early embryos. This Gallus gallus (Chicken) protein is Hemoglobin subunit epsilon (HBE).